The following is a 551-amino-acid chain: Interleukin-2 receptor subunit beta (551 aa).

The first 26 residues, 1–26 (MAAPALSWRLPLLILLLPLATPWASA), serve as a signal peptide directing secretion. The Extracellular segment spans residues 27–240 (TVNGTSQFTC…TKPASLGKDT (214 aa)). Residues N29, N43, and N71 are each glycosylated (N-linked (GlcNAc...) asparagine). A disulfide bridge links C36 with C46. Cysteines 74 and 86 form a disulfide. Residues 134–234 (APISLQVVHV…QPLAFRTKPA (101 aa)) form the Fibronectin type-III domain. An N-linked (GlcNAc...) asparagine glycan is attached at N149. A WSXWS motif motif is present at residues 220–224 (WSPWS). Residues 241-265 (IPWLGHLLVGLSGAFGFIILVYLLI) form a helical membrane-spanning segment. Over 266 to 551 (NCRNTGPWLK…LQGQDPTHLV (286 aa)) the chain is Cytoplasmic. A Box 1 motif motif is present at residues 278 to 286 (LKCHTPDPS). 2 disordered regions span residues 393 to 412 (DEGVAGAPTGSSPQPLQPLS) and 433 to 476 (SLLG…GPPT).

Belongs to the type I cytokine receptor family. Type 4 subfamily. In terms of assembly, non-covalent dimer of an alpha and a beta subunit. IL2R exists in 3 different forms: a high affinity dimer, an intermediate affinity monomer (beta subunit), and a low affinity monomer (alpha subunit). The high and intermediate affinity forms also associate with a gamma subunit. Interacts with SHB upon interleukin stimulation.

The protein resides in the cell membrane. The protein localises to the cell surface. Functionally, receptor for interleukin-2. This beta subunit is involved in receptor mediated endocytosis and transduces the mitogenic signals of IL2. Probably in association with IL15RA, involved in the stimulation of neutrophil phagocytosis by IL15. This chain is Interleukin-2 receptor subunit beta (IL2RB), found in Pan troglodytes (Chimpanzee).